A 180-amino-acid polypeptide reads, in one-letter code: Shikimate kinase (180 aa).

14-19 (GAGKSC) is an ATP binding site. Residue serine 18 participates in Mg(2+) binding. Aspartate 36, arginine 60, and glycine 82 together coordinate substrate. Arginine 120 contacts ATP. Arginine 139 contributes to the substrate binding site.

The protein belongs to the shikimate kinase family. In terms of assembly, monomer. Requires Mg(2+) as cofactor.

It is found in the cytoplasm. The enzyme catalyses shikimate + ATP = 3-phosphoshikimate + ADP + H(+). It participates in metabolic intermediate biosynthesis; chorismate biosynthesis; chorismate from D-erythrose 4-phosphate and phosphoenolpyruvate: step 5/7. Catalyzes the specific phosphorylation of the 3-hydroxyl group of shikimic acid using ATP as a cosubstrate. This is Shikimate kinase from Xanthomonas campestris pv. campestris (strain 8004).